A 310-amino-acid polypeptide reads, in one-letter code: Dermonecrotic toxin LiSicTox-alphaII2 (310 aa).

The N-terminal stretch at 1–18 is a signal peptide; the sequence is MLLRIALILGCWSILSEG. Positions 19–26 are excised as a propeptide; sequence AENDIAER. Residue H38 is part of the active site. Mg(2+)-binding residues include E58 and D60. H74 (nucleophile) is an active-site residue. 2 disulfide bridges follow: C78–C84 and C80–C224. Residue N99 is glycosylated (N-linked (GlcNAc...) asparagine). D118 contributes to the Mg(2+) binding site.

The protein belongs to the arthropod phospholipase D family. Class II subfamily. The cofactor is Mg(2+). As to expression, expressed by the venom gland.

The protein resides in the secreted. It carries out the reaction an N-(acyl)-sphingosylphosphocholine = an N-(acyl)-sphingosyl-1,3-cyclic phosphate + choline. It catalyses the reaction an N-(acyl)-sphingosylphosphoethanolamine = an N-(acyl)-sphingosyl-1,3-cyclic phosphate + ethanolamine. The enzyme catalyses a 1-acyl-sn-glycero-3-phosphocholine = a 1-acyl-sn-glycero-2,3-cyclic phosphate + choline. The catalysed reaction is a 1-acyl-sn-glycero-3-phosphoethanolamine = a 1-acyl-sn-glycero-2,3-cyclic phosphate + ethanolamine. Functionally, dermonecrotic toxins cleave the phosphodiester linkage between the phosphate and headgroup of certain phospholipids (sphingolipid and lysolipid substrates), forming an alcohol (often choline) and a cyclic phosphate. This toxin acts on sphingomyelin (SM). It may also act on ceramide phosphoethanolamine (CPE), lysophosphatidylcholine (LPC) and lysophosphatidylethanolamine (LPE), but not on lysophosphatidylserine (LPS), and lysophosphatidylglycerol (LPG). It acts by transphosphatidylation, releasing exclusively cyclic phosphate products as second products. Induces dermonecrosis, hemolysis, increased vascular permeability, edema, inflammatory response, and platelet aggregation. The polypeptide is Dermonecrotic toxin LiSicTox-alphaII2 (Loxosceles intermedia (Brown spider)).